A 299-amino-acid polypeptide reads, in one-letter code: MRKYSQRHIPVMVREVIEFLKPEDEKIILDCTVGEGGHSKAILEHCPGCRIIGIDVDSEVLRIAEEKLKEFSDRASLFKISYREADFLLKTLGVEKVDGILMDLGVSTYQLKGENRGFTFEREEPLDMRMDLESEVTAQKVLNELPEEELARIIFEYGEEKKFARRIARKIVENRPLNTTLDLVKAVREALPSYEIRRRKRHFATKTFQAIRIYVNRELENLKEFLRKAEDLLNPGGRIVVISFHSLEDRIVKETFRNSKKLRILTEKPVRPSEEEIRENPRARSGRLRAAERIEKGGD.

S-adenosyl-L-methionine-binding positions include 36-38 (GGH), D55, D103, and Q110. Basic and acidic residues-rich tracts occupy residues 268-282 (KPVRPSEEEIRENPR) and 289-299 (RAAERIEKGGD). Residues 268 to 299 (KPVRPSEEEIRENPRARSGRLRAAERIEKGGD) are disordered.

The protein belongs to the methyltransferase superfamily. RsmH family.

Its subcellular location is the cytoplasm. It catalyses the reaction cytidine(1402) in 16S rRNA + S-adenosyl-L-methionine = N(4)-methylcytidine(1402) in 16S rRNA + S-adenosyl-L-homocysteine + H(+). Its function is as follows. Specifically methylates the N4 position of cytidine in position 1402 (C1402) of 16S rRNA. The chain is Ribosomal RNA small subunit methyltransferase H from Thermotoga petrophila (strain ATCC BAA-488 / DSM 13995 / JCM 10881 / RKU-1).